A 246-amino-acid chain; its full sequence is Bis(5'-nucleosyl)-tetraphosphatase PrpE [asymmetrical] (246 aa).

It belongs to the PrpE family. The cofactor is Ni(2+).

It catalyses the reaction P(1),P(4)-bis(5'-guanosyl) tetraphosphate + H2O = GMP + GTP + 2 H(+). In terms of biological role, asymmetrically hydrolyzes Ap4p to yield AMP and ATP. The chain is Bis(5'-nucleosyl)-tetraphosphatase PrpE [asymmetrical] from Bacillus cereus (strain AH820).